Reading from the N-terminus, the 142-residue chain is Nucleoside diphosphate kinase (142 aa).

ATP is bound by residues lysine 11, phenylalanine 59, arginine 87, threonine 93, arginine 104, and asparagine 114. Catalysis depends on histidine 117, which acts as the Pros-phosphohistidine intermediate.

It belongs to the NDK family. Homotetramer. Mg(2+) serves as cofactor.

Its subcellular location is the cytoplasm. The enzyme catalyses a 2'-deoxyribonucleoside 5'-diphosphate + ATP = a 2'-deoxyribonucleoside 5'-triphosphate + ADP. The catalysed reaction is a ribonucleoside 5'-diphosphate + ATP = a ribonucleoside 5'-triphosphate + ADP. In terms of biological role, major role in the synthesis of nucleoside triphosphates other than ATP. The ATP gamma phosphate is transferred to the NDP beta phosphate via a ping-pong mechanism, using a phosphorylated active-site intermediate. This chain is Nucleoside diphosphate kinase, found in Pectobacterium carotovorum subsp. carotovorum (strain PC1).